The chain runs to 200 residues: WUSCHEL-related homeobox 9 (200 aa).

A DNA-binding region (homeobox; WUS-type) is located at residues 10 to 74; that stretch reads VKCGRWNPTA…NHKARERHHH (65 aa). A compositionally biased stretch (basic residues) spans 70 to 80; that stretch reads ERHHHKKRRRG. Residues 70 to 118 form a disordered region; the sequence is ERHHHKKRRRGASSPDSGSNDDDGRAAAHEGDADLVLQPPESKREARSY. Basic and acidic residues predominate over residues 91–101; sequence DDGRAAAHEGD.

This sequence belongs to the WUS homeobox family. As to expression, specifically expressed in the central cells of the quiescent center (QC) of the root.

It localises to the nucleus. Transcription factor which may be involved in the specification and maintenance of the stem cells (QC cells) in the root apical meristem (RAM). The chain is WUSCHEL-related homeobox 9 (WOX9) from Oryza sativa subsp. japonica (Rice).